A 129-amino-acid polypeptide reads, in one-letter code: uncharacterized protein (129 aa).

This sequence belongs to the asfivirus C129R family.

It is found in the virion. Its function is as follows. Plays a role in the inhibition of type I interferon signaling pathway. Mechanistically, specifically interacts with 2',3'-cGAMP and cleaves it via its phosphodiesterase activity. In turn, prevents 2',3'-cGAMP interaction with host ER-resident STING1 leading to inhibition of downstream signaling pathway and type I interferon production. This is an uncharacterized protein from African swine fever virus (strain Badajoz 1971 Vero-adapted) (Ba71V).